The sequence spans 148 residues: FAD synthase (148 aa).

Residues 14-15 (TF), 19-22 (HPGH), and Asp-97 contribute to the ATP site.

The protein belongs to the archaeal FAD synthase family. In terms of assembly, homodimer. The cofactor is a divalent metal cation.

It carries out the reaction FMN + ATP + H(+) = FAD + diphosphate. Its pathway is cofactor biosynthesis; FAD biosynthesis; FAD from FMN: step 1/1. In terms of biological role, catalyzes the transfer of the AMP portion of ATP to flavin mononucleotide (FMN) to produce flavin adenine dinucleotide (FAD) coenzyme. This is FAD synthase from Natrialba magadii (strain ATCC 43099 / DSM 3394 / CCM 3739 / CIP 104546 / IAM 13178 / JCM 8861 / NBRC 102185 / NCIMB 2190 / MS3) (Natronobacterium magadii).